The primary structure comprises 511 residues: Probable cytochrome P450 4d21 (511 aa).

Cysteine 456 contacts heme.

The protein belongs to the cytochrome P450 family. The cofactor is heme.

Its subcellular location is the endoplasmic reticulum membrane. The protein resides in the microsome membrane. In terms of biological role, may be involved in the metabolism of insect hormones and in the breakdown of synthetic insecticides. The protein is Probable cytochrome P450 4d21 (Cyp4d21) of Drosophila melanogaster (Fruit fly).